The primary structure comprises 309 residues: Probable MRF1 mitochondrial N(5)-glutamine methyltransferase mtq1 (309 aa).

Residues 124-128, aspartate 148, and asparagine 200 contribute to the S-adenosyl-L-methionine site; that span reads CTGSG. 200 to 203 serves as a coordination point for substrate; sequence NPPY.

Belongs to the protein N5-glutamine methyltransferase family.

The protein resides in the mitochondrion. The catalysed reaction is L-glutaminyl-[peptide chain release factor] + S-adenosyl-L-methionine = N(5)-methyl-L-glutaminyl-[peptide chain release factor] + S-adenosyl-L-homocysteine + H(+). In terms of biological role, methylates MRF1 on 'Gln-270' using S-adenosyl L-methionine as methyl donor. The polypeptide is Probable MRF1 mitochondrial N(5)-glutamine methyltransferase mtq1 (mtq1) (Schizosaccharomyces pombe (strain 972 / ATCC 24843) (Fission yeast)).